A 282-amino-acid polypeptide reads, in one-letter code: PILR alpha-associated neural protein (282 aa).

Positions 1–31 (MESRMWPALLLSHLLPLWPLLLLPLPPPAQG) are cleaved as a signal peptide. Residues 28–99 (PAQGSSSSPR…PSGFEEGPPS (72 aa)) are disordered. At 32 to 178 (SSSSPRTPPA…FGGRGEGVDP (147 aa)) the chain is on the extracellular side. A compositionally biased stretch (low complexity) spans 46 to 56 (PCARGGPSAPR). The O-linked (GalNAc...) threonine glycan is linked to Thr-140. The helical transmembrane segment at 179–199 (QLYVTITISIIIVLVATGIIF) threads the bilayer. The Cytoplasmic portion of the chain corresponds to 200–282 (KFCWDRSQKR…QLNRIPLVNL (83 aa)). The disordered stretch occupies residues 209 to 282 (RRRPSGQQGA…QLNRIPLVNL (74 aa)). Residues 213-229 (SGQQGALRQEESQQPLT) show a composition bias toward polar residues.

In terms of processing, O-glycosylation at Thr-140 is essential for recognition by PILRA. As to expression, mainly expressed in adult brain and cerebellum. Weaker expression in fetal brain and virtually no expression in spleen, heart, kidney, liver and dorsal ganglion relative to brain.

It localises to the membrane. In terms of biological role, acts as a ligand for PILRA in neural tissues, where it may be involved in immune regulation. The polypeptide is PILR alpha-associated neural protein (PIANP) (Homo sapiens (Human)).